The chain runs to 305 residues: Protoheme IX farnesyltransferase (305 aa).

Helical transmembrane passes span 31–51 (VMSL…YSVH), 52–72 (PFIA…AGAI), 96–118 (VIES…FFMA), 123–145 (LLAS…IWLK), 151–171 (NIVI…AAVS), 179–199 (IILF…LALF), 225–245 (ILIY…IGMN), 247–267 (FIYL…AGSL), and 281–301 (FAYS…TNTI).

It belongs to the UbiA prenyltransferase family. Protoheme IX farnesyltransferase subfamily.

The protein resides in the cell membrane. The catalysed reaction is heme b + (2E,6E)-farnesyl diphosphate + H2O = Fe(II)-heme o + diphosphate. It functions in the pathway porphyrin-containing compound metabolism; heme O biosynthesis; heme O from protoheme: step 1/1. Its function is as follows. Converts heme B (protoheme IX) to heme O by substitution of the vinyl group on carbon 2 of heme B porphyrin ring with a hydroxyethyl farnesyl side group. The chain is Protoheme IX farnesyltransferase from Rickettsia africae (strain ESF-5).